The following is a 133-amino-acid chain: Putative biopolymer transport protein ExbD-like 1 (133 aa).

Over 1–15 the chain is Cytoplasmic; it reads MNYDNYWDEDKPELN. Residues 16 to 32 form a helical membrane-spanning segment; it reads ITPLVDVMLVLLAILMV. Residues 33-133 lie on the Periplasmic side of the membrane; that stretch reads TTPTLTYKEE…FLKVSLITSP (101 aa).

Belongs to the ExbD/TolR family.

It localises to the cell inner membrane. This Helicobacter pylori (strain ATCC 700392 / 26695) (Campylobacter pylori) protein is Putative biopolymer transport protein ExbD-like 1.